The sequence spans 133 residues: Complexin-1 (133 aa).

Disordered stretches follow at residues 1 to 40 and 85 to 112; these read MDFV…RLEA and AMEA…DEEE. The segment covering 15-40 has biased composition (basic and acidic residues); it reads DMGKMLGGDEEKDPDAEKKEEERLEA. Residues 28–60 are a coiled coil; sequence PDAEKKEEERLEALRQAEEERAGKYAKMEAERE.

It belongs to the complexin/synaphin family. In terms of assembly, binds to the SNARE core complex containing SNAP25, VAMP2 and syntaxin-1. In terms of tissue distribution, nervous system. Present in electric organ (at protein level).

Its subcellular location is the cytoplasm. It is found in the cytosol. In terms of biological role, positively regulates a late step in synaptic vesicle exocytosis. The polypeptide is Complexin-1 (Narke japonica (Japanese sleeper ray)).